We begin with the raw amino-acid sequence, 2623 residues long: Immunoglobulin superfamily member 10 (2623 aa).

An N-terminal signal peptide occupies residues 1–28 (MKVKGRGITCLLVSFAVICLVATPGGKA). The LRRNT domain occupies 29-56 (CPRRCACYMPTEVHCTFRYLTSIPDSIP). LRR repeat units follow at residues 58–79 (NVERINLGYNSLVRLMETDFSG), 82–103 (KLELLMLHSNGIHTIPDKTFSD), 106–127 (ALQVLKMSYNKVRKLQKDTFYG), 130–151 (SLTRLHMDHNNIEFINPEVFYG), 154–175 (FLRLVHLEGNQLTKLHPDTFVS), and 186–207 (FIKFLYLSDNFLTSLPQEMVSY). The LRRCT domain maps to 219-281 (NPWTCDCHLK…VSAAAFQCAK (63 aa)). Residues asparagine 319 and asparagine 439 are each glycosylated (N-linked (GlcNAc...) asparagine). Ig-like C2-type domains are found at residues 461 to 567 (PRAE…YRIT) and 571 to 661 (PLVE…FQVS). 2 disulfides stabilise this stretch: cysteine 497–cysteine 551 and cysteine 595–cysteine 645. N-linked (GlcNAc...) asparagine glycosylation is present at asparagine 627. Disordered regions lie at residues 668–692 (RPLEHDGETEGSGLDESNPIAHLKE) and 767–788 (AMPDKRENTTVSPPPVVTQLPN). N-linked (GlcNAc...) asparagine glycosylation is found at asparagine 774 and asparagine 999. Disordered regions lie at residues 1334–1376 (TQTE…AMTP) and 1434–1453 (STIASETTLSSKSHQSTTTR). Basic and acidic residues predominate over residues 1335–1356 (QTERSRAQTIQREQEPQKKNRT). Residues 1357 to 1373 (DPNISPDQSSGFTTPTA) are compositionally biased toward polar residues. 10 Ig-like C2-type domains span residues 1648-1739 (PRIV…VTLS), 1745-1836 (PRIL…VKIQ), 1841-1933 (PPVI…VMLT), 1941-2034 (PRIE…VSLR), 2037-2135 (PAKI…VHLT), 2141-2229 (PRIR…YKLD), 2234-2331 (PPLI…LEVL), 2337-2427 (PTFR…VILE), 2432-2518 (PVIL…TLIT), and 2528-2623 (PRIT…IQVI). 3 disulfides stabilise this stretch: cysteine 1670-cysteine 1723, cysteine 1767-cysteine 1820, and cysteine 1864-cysteine 1917. N-linked (GlcNAc...) asparagine glycans are attached at residues asparagine 1899 and asparagine 1962. Intrachain disulfides connect cysteine 1963–cysteine 2016, cysteine 2060–cysteine 2119, cysteine 2163–cysteine 2213, cysteine 2261–cysteine 2313, cysteine 2359–cysteine 2411, cysteine 2454–cysteine 2506, and cysteine 2550–cysteine 2605. A glycan (N-linked (GlcNAc...) asparagine) is linked at asparagine 2101. Tyrosine 2603 bears the Phosphotyrosine mark.

Its subcellular location is the secreted. Its function is as follows. Involved in the control of early migration of neurons expressing gonadotropin-releasing hormone (GNRH neurons). May be involved in the maintenance of osteochondroprogenitor cells pool. This chain is Immunoglobulin superfamily member 10 (IGSF10), found in Homo sapiens (Human).